A 447-amino-acid chain; its full sequence is Na(+)-translocating NADH-quinone reductase subunit A (447 aa).

Belongs to the NqrA family. Composed of six subunits; NqrA, NqrB, NqrC, NqrD, NqrE and NqrF.

It catalyses the reaction a ubiquinone + n Na(+)(in) + NADH + H(+) = a ubiquinol + n Na(+)(out) + NAD(+). NQR complex catalyzes the reduction of ubiquinone-1 to ubiquinol by two successive reactions, coupled with the transport of Na(+) ions from the cytoplasm to the periplasm. NqrA to NqrE are probably involved in the second step, the conversion of ubisemiquinone to ubiquinol. This chain is Na(+)-translocating NADH-quinone reductase subunit A, found in Neisseria meningitidis serogroup A / serotype 4A (strain DSM 15465 / Z2491).